The chain runs to 682 residues: Potassium-transporting ATPase ATP-binding subunit (682 aa).

A run of 4 helical transmembrane segments spans residues 34–54 (PVMF…IAMA), 62–82 (ALFS…ANFA), 219–239 (IALT…TATL), and 254–274 (VLVA…LSAI). Aspartate 307 acts as the 4-aspartylphosphate intermediate in catalysis. Residues aspartate 344, glutamate 348, 377–384 (FTAQSRMS), and lysine 395 each bind ATP. Mg(2+)-binding residues include aspartate 518 and aspartate 522. Transmembrane regions (helical) follow at residues 588–608 (FAII…LNIM), 616–636 (AILS…PLAL), and 656–676 (IYGL…DLLL).

It belongs to the cation transport ATPase (P-type) (TC 3.A.3) family. Type IA subfamily. In terms of assembly, the system is composed of three essential subunits: KdpA, KdpB and KdpC.

It localises to the cell inner membrane. It carries out the reaction K(+)(out) + ATP + H2O = K(+)(in) + ADP + phosphate + H(+). Its function is as follows. Part of the high-affinity ATP-driven potassium transport (or Kdp) system, which catalyzes the hydrolysis of ATP coupled with the electrogenic transport of potassium into the cytoplasm. This subunit is responsible for energy coupling to the transport system and for the release of the potassium ions to the cytoplasm. The protein is Potassium-transporting ATPase ATP-binding subunit of Escherichia coli O8 (strain IAI1).